Consider the following 181-residue polypeptide: MKFLFDLFPIILFFATYKIYGIYSATAVAIVATFAQIGWVWLRHRKVDNMLWVSLAIIIVFGGATLILQDETFIKWKPTVLYWLFAVILFLAHSFFGKNLIRAMMKDQIKLPEPVWVRLNISWSVFFGAMGALNLYVAYNYSTDTWVNFKLFGFMGLMFVFIILQALLLGKYMEKNDNQKI.

The next 5 membrane-spanning stretches (helical) occupy residues 24–44, 49–69, 81–101, 119–139, and 149–169; these read SATA…WLRH, NMLW…LILQ, LYWL…KNLI, LNIS…YVAY, and FKLF…ALLL.

This sequence belongs to the YciB family.

The protein resides in the cell inner membrane. Functionally, plays a role in cell envelope biogenesis, maintenance of cell envelope integrity and membrane homeostasis. In Nitrosomonas eutropha (strain DSM 101675 / C91 / Nm57), this protein is Inner membrane-spanning protein YciB.